Consider the following 251-residue polypeptide: Adenosylcobinamide-GDP ribazoletransferase (251 aa).

Helical transmembrane passes span 44-64 (LVGLLAGLVCAGPFLLGLLAG), 114-134 (IGAFGVLGIVFGVLGQVVLAH), 143-163 (GALVWAPVLGRAACVVLAACV), 177-197 (AGATHMTVLFCAGVTAATGVA), and 198-218 (LAGPPAVLAAALPCACAVVWL).

This sequence belongs to the CobS family. Mg(2+) is required as a cofactor.

Its subcellular location is the cell inner membrane. The enzyme catalyses alpha-ribazole + adenosylcob(III)inamide-GDP = adenosylcob(III)alamin + GMP + H(+). The catalysed reaction is alpha-ribazole 5'-phosphate + adenosylcob(III)inamide-GDP = adenosylcob(III)alamin 5'-phosphate + GMP + H(+). Its pathway is cofactor biosynthesis; adenosylcobalamin biosynthesis; adenosylcobalamin from cob(II)yrinate a,c-diamide: step 7/7. Its function is as follows. Joins adenosylcobinamide-GDP and alpha-ribazole to generate adenosylcobalamin (Ado-cobalamin). Also synthesizes adenosylcobalamin 5'-phosphate from adenosylcobinamide-GDP and alpha-ribazole 5'-phosphate. The protein is Adenosylcobinamide-GDP ribazoletransferase of Nitratidesulfovibrio vulgaris (strain DSM 19637 / Miyazaki F) (Desulfovibrio vulgaris).